The sequence spans 315 residues: Small ribosomal subunit biogenesis GTPase RsgA (315 aa).

The CP-type G domain maps to 79–243 (LSKESHILGA…LIDTPGIKGF (165 aa)). Residues 128-131 (NKID) and 182-190 (GHSGVGKSS) each bind GTP. Zn(2+)-binding residues include C267, C272, H274, and C280.

It belongs to the TRAFAC class YlqF/YawG GTPase family. RsgA subfamily. As to quaternary structure, monomer. Associates with 30S ribosomal subunit, binds 16S rRNA. Zn(2+) serves as cofactor.

The protein localises to the cytoplasm. Its function is as follows. One of several proteins that assist in the late maturation steps of the functional core of the 30S ribosomal subunit. Helps release RbfA from mature subunits. May play a role in the assembly of ribosomal proteins into the subunit. Circularly permuted GTPase that catalyzes slow GTP hydrolysis, GTPase activity is stimulated by the 30S ribosomal subunit. This is Small ribosomal subunit biogenesis GTPase RsgA from Porphyromonas gingivalis (strain ATCC 33277 / DSM 20709 / CIP 103683 / JCM 12257 / NCTC 11834 / 2561).